The following is a 326-amino-acid chain: Target of rapamycin complex subunit LST8 (326 aa).

At Met-1 the chain carries N-acetylmethionine. 5 WD repeats span residues 1 to 37 (MNTS…CTRT), 40 to 80 (HQDS…PIIS), 83 to 122 (GVNK…LQCQ), 126 to 165 (QVNA…NEQL), and 168 to 207 (EPEV…GDEV). Position 51 is a phosphothreonine (Thr-51). Lys-86 is covalently cross-linked (Glycyl lysine isopeptide (Lys-Gly) (interchain with G-Cter in SUMO3)). Residues Lys-215, Lys-245, and Lys-261 each participate in a glycyl lysine isopeptide (Lys-Gly) (interchain with G-Cter in SUMO3) cross-link. The WD 6 repeat unit spans residues 218–257 (AHTRYALQCRFSPDSTLLATCSADQTCKIWRTSNFSLMTE). The stretch at 268–309 (SSRGWMWGCAFSGDSQYIVTASSDNLARLWCVETGEIKREYG) is one WD 7 repeat. A Glycyl lysine isopeptide (Lys-Gly) (interchain with G-Cter in SUMO3); alternate cross-link involves residue Lys-305. Residues Lys-305 and Lys-313 each participate in a glycyl lysine isopeptide (Lys-Gly) (interchain with G-Cter in ubiquitin); alternate cross-link. A Glycyl lysine isopeptide (Lys-Gly) (interchain with G-Cter in SUMO1); alternate cross-link involves residue Lys-313.

The protein belongs to the WD repeat LST8 family. In terms of assembly, part of the mechanistic target of rapamycin complex 1 (mTORC1) which contains MTOR, MLST8 and RPTOR. mTORC1 associates with AKT1S1/PRAS40, which inhibits its activity. mTORC1 binds to and is inhibited by FKBP12-rapamycin. Within mTORC1, interacts directly with MTOR and RPTOR. Component of the mechanistic target of rapamycin complex 2 (mTORC2), consisting in two heterotretramers composed of MTOR, MLST8, RICTOR and MAPKAP1/SIN1. Contrary to mTORC1, mTORC2 does not bind to and is not sensitive to FKBP12-rapamycin. mTORC1 and mTORC2 associate with DEPTOR, which regulates their activity. Interacts with RHEB. Interacts with MEAK7. Interacts with SIK3. Interacts with SLC38A7; this interaction promotes the recruitment of mTORC1 to the lysosome and its subsequent activation. Phosphorylation at Thr-51 by CDK1 promotes ubiquitination by the SCF(FBXW7) complex, followed by degradation. Post-translationally, ubiquitination by the SCF(FBXW7) and SCF(FBXW11) complexes following phosphorylation at Thr-51 by CDK1, leads to its degradation by the proteasome. Ubiquitination at Lys-305 and Lys-313 by TRAF2 via 'Lys-63'-linked polyubiquitin chains inhibits formation of the mTORC2 complex, while promoting formation of the mTORC1 complex: ubiquitination disrupts the interaction between MLST8 and MAPKAP1/SIN1 to favor mTORC1 assembly. Deubiquitination at Lys-305 and Lys-313 by OTUD7B promotes MLST8 interaction with MAPKAP1/SIN1, facilitating mTORC2 assembly. In terms of processing, sumoylation with SUMO1, SUMO2 and SUMO3 promotes assembly of both mTORC1 and mTORC2 complexes.

It localises to the lysosome membrane. The protein resides in the cytoplasm. Its function is as follows. Subunit of both mTORC1 and mTORC2, which regulates cell growth and survival in response to nutrient and hormonal signals. mTORC1 is activated in response to growth factors or amino acids. In response to nutrients, mTORC1 is recruited to the lysosome membrane and promotes protein, lipid and nucleotide synthesis by phosphorylating several substrates, such as ribosomal protein S6 kinase (RPS6KB1 and RPS6KB2) and EIF4EBP1 (4E-BP1). In the same time, it inhibits catabolic pathways by phosphorylating the autophagy initiation components ULK1 and ATG13, as well as transcription factor TFEB, a master regulators of lysosomal biogenesis and autophagy. The mTORC1 complex is inhibited in response to starvation and amino acid depletion. Within mTORC1, MLST8 interacts directly with MTOR and enhances its kinase activity. In nutrient-poor conditions, stabilizes the MTOR-RPTOR interaction and favors RPTOR-mediated inhibition of MTOR activity. As part of the mTORC2 complex, transduces signals from growth factors to pathways involved in proliferation, cytoskeletal organization, lipogenesis and anabolic output. mTORC2 is also activated by growth factors, but seems to be nutrient-insensitive. In response to growth factors, mTORC2 phosphorylates and activates AGC protein kinase family members, including AKT (AKT1, AKT2 and AKT3), PKC (PRKCA, PRKCB and PRKCE) and SGK1. mTORC2 functions upstream of Rho GTPases to regulate the actin cytoskeleton, probably by activating one or more Rho-type guanine nucleotide exchange factors. mTORC2 promotes the serum-induced formation of stress-fibers or F-actin. mTORC2 plays a critical role in AKT1 activation by mediating phosphorylation of different sites depending on the context, such as 'Thr-450', 'Ser-473', 'Ser-477' or 'Thr-479', facilitating the phosphorylation of the activation loop of AKT1 on 'Thr-308' by PDPK1/PDK1 which is a prerequisite for full activation. mTORC2 regulates the phosphorylation of SGK1 at 'Ser-422'. mTORC2 also modulates the phosphorylation of PRKCA on 'Ser-657'. Within mTORC2, MLST8 acts as a bridge between MAPKAP1/SIN1 and MTOR. The chain is Target of rapamycin complex subunit LST8 from Bos taurus (Bovine).